Consider the following 205-residue polypeptide: High frequency lysogenization protein HflD homolog (205 aa).

This sequence belongs to the HflD family.

The protein localises to the cytoplasm. Its subcellular location is the cell inner membrane. The protein is High frequency lysogenization protein HflD homolog of Shewanella sp. (strain W3-18-1).